A 588-amino-acid polypeptide reads, in one-letter code: 2-succinyl-5-enolpyruvyl-6-hydroxy-3-cyclohexene-1-carboxylate synthase (588 aa).

The segment at methionine 1–serine 22 is disordered.

It belongs to the TPP enzyme family. MenD subfamily. Homodimer. It depends on Mg(2+) as a cofactor. The cofactor is Mn(2+). Thiamine diphosphate serves as cofactor.

It catalyses the reaction isochorismate + 2-oxoglutarate + H(+) = 5-enolpyruvoyl-6-hydroxy-2-succinyl-cyclohex-3-ene-1-carboxylate + CO2. The protein operates within quinol/quinone metabolism; 1,4-dihydroxy-2-naphthoate biosynthesis; 1,4-dihydroxy-2-naphthoate from chorismate: step 2/7. Its pathway is quinol/quinone metabolism; menaquinone biosynthesis. Its function is as follows. Catalyzes the thiamine diphosphate-dependent decarboxylation of 2-oxoglutarate and the subsequent addition of the resulting succinic semialdehyde-thiamine pyrophosphate anion to isochorismate to yield 2-succinyl-5-enolpyruvyl-6-hydroxy-3-cyclohexene-1-carboxylate (SEPHCHC). This chain is 2-succinyl-5-enolpyruvyl-6-hydroxy-3-cyclohexene-1-carboxylate synthase, found in Clavibacter michiganensis subsp. michiganensis (strain NCPPB 382).